The following is a 218-amino-acid chain: N-(5'-phosphoribosyl)anthranilate isomerase (218 aa).

The protein belongs to the TrpF family.

It carries out the reaction N-(5-phospho-beta-D-ribosyl)anthranilate = 1-(2-carboxyphenylamino)-1-deoxy-D-ribulose 5-phosphate. It functions in the pathway amino-acid biosynthesis; L-tryptophan biosynthesis; L-tryptophan from chorismate: step 3/5. The chain is N-(5'-phosphoribosyl)anthranilate isomerase from Rhodopseudomonas palustris (strain HaA2).